Consider the following 259-residue polypeptide: Hydroxyacylglutathione hydrolase (259 aa).

Positions 56, 58, 60, 61, 112, 133, and 171 each coordinate Zn(2+). Basic and acidic residues predominate over residues Arg224–Ser238. Positions Arg224 to Gln245 are disordered.

This sequence belongs to the metallo-beta-lactamase superfamily. Glyoxalase II family. In terms of assembly, monomer. Zn(2+) is required as a cofactor.

The enzyme catalyses an S-(2-hydroxyacyl)glutathione + H2O = a 2-hydroxy carboxylate + glutathione + H(+). It functions in the pathway secondary metabolite metabolism; methylglyoxal degradation; (R)-lactate from methylglyoxal: step 2/2. Its function is as follows. Thiolesterase that catalyzes the hydrolysis of S-D-lactoyl-glutathione to form glutathione and D-lactic acid. The protein is Hydroxyacylglutathione hydrolase of Pseudomonas savastanoi pv. phaseolicola (strain 1448A / Race 6) (Pseudomonas syringae pv. phaseolicola (strain 1448A / Race 6)).